A 315-amino-acid chain; its full sequence is Small ribosomal subunit biogenesis GTPase RsgA (315 aa).

In terms of domain architecture, CP-type G spans 82–246 (DQFKSKVLAA…LIDSPGFQEF (165 aa)). Residues 130–133 (NKID) and 184–192 (GQSGMGKSS) contribute to the GTP site. Zn(2+)-binding residues include Cys270, Cys275, His277, and Cys283.

Belongs to the TRAFAC class YlqF/YawG GTPase family. RsgA subfamily. In terms of assembly, monomer. Associates with 30S ribosomal subunit, binds 16S rRNA. Zn(2+) serves as cofactor.

It localises to the cytoplasm. Its function is as follows. One of several proteins that assist in the late maturation steps of the functional core of the 30S ribosomal subunit. Helps release RbfA from mature subunits. May play a role in the assembly of ribosomal proteins into the subunit. Circularly permuted GTPase that catalyzes slow GTP hydrolysis, GTPase activity is stimulated by the 30S ribosomal subunit. The chain is Small ribosomal subunit biogenesis GTPase RsgA from Ralstonia pickettii (strain 12J).